The sequence spans 345 residues: Protein RecA (345 aa).

Glycine 65–threonine 72 is an ATP binding site.

Belongs to the RecA family.

Its subcellular location is the cytoplasm. Its function is as follows. Can catalyze the hydrolysis of ATP in the presence of single-stranded DNA, the ATP-dependent uptake of single-stranded DNA by duplex DNA, and the ATP-dependent hybridization of homologous single-stranded DNAs. It interacts with LexA causing its activation and leading to its autocatalytic cleavage. The sequence is that of Protein RecA from Stenotrophomonas maltophilia (strain R551-3).